The following is a 137-amino-acid chain: Large ribosomal subunit protein uL16 (137 aa).

Belongs to the universal ribosomal protein uL16 family. As to quaternary structure, part of the 50S ribosomal subunit.

Its function is as follows. Binds 23S rRNA and is also seen to make contacts with the A and possibly P site tRNAs. The chain is Large ribosomal subunit protein uL16 from Nitrobacter hamburgensis (strain DSM 10229 / NCIMB 13809 / X14).